Here is a 182-residue protein sequence, read N- to C-terminus: Nucleosome assembly protein 1-like 5 (182 aa).

The segment at 1–71 (MADSENQGPA…APKPKNDFIE (71 aa)) is disordered. Composition is skewed to low complexity over residues 7–21 (QGPAEPSQAAAAAEA) and 28–49 (AEGGAQGGDCDSAAGDPDSAAG). Residues 81 to 107 (VLALKKLQKRCDKIEAKFDKEFQALEK) adopt a coiled-coil conformation. The interval 134-182 (LEGEEEEEEEYEDDEEEGEDEEEEEAAAEAAAGAKHDDAHAEMPDDAKK) is disordered. Residues 135-160 (EGEEEEEEEYEDDEEEGEDEEEEEAA) are compositionally biased toward acidic residues. Positions 167-182 (AKHDDAHAEMPDDAKK) are enriched in basic and acidic residues.

This sequence belongs to the nucleosome assembly protein (NAP) family. In terms of tissue distribution, predominantly expressed in brain.

It localises to the nucleus. The polypeptide is Nucleosome assembly protein 1-like 5 (NAP1L5) (Homo sapiens (Human)).